The following is a 321-amino-acid chain: Ribose-phosphate pyrophosphokinase (321 aa).

Residues 44–46 (DGE) and 103–104 (RQ) each bind ATP. Residues His-137 and Asp-179 each contribute to the Mg(2+) site. The active site involves Lys-202. D-ribose 5-phosphate is bound by residues Arg-204, Asp-228, and 232-236 (DTAGT).

This sequence belongs to the ribose-phosphate pyrophosphokinase family. Class I subfamily. Homohexamer. Mg(2+) serves as cofactor.

Its subcellular location is the cytoplasm. The catalysed reaction is D-ribose 5-phosphate + ATP = 5-phospho-alpha-D-ribose 1-diphosphate + AMP + H(+). It functions in the pathway metabolic intermediate biosynthesis; 5-phospho-alpha-D-ribose 1-diphosphate biosynthesis; 5-phospho-alpha-D-ribose 1-diphosphate from D-ribose 5-phosphate (route I): step 1/1. In terms of biological role, involved in the biosynthesis of the central metabolite phospho-alpha-D-ribosyl-1-pyrophosphate (PRPP) via the transfer of pyrophosphoryl group from ATP to 1-hydroxyl of ribose-5-phosphate (Rib-5-P). The polypeptide is Ribose-phosphate pyrophosphokinase (Staphylococcus aureus (strain COL)).